A 112-amino-acid chain; its full sequence is Peptidyl-tRNA hydrolase (112 aa).

Belongs to the PTH2 family.

Its subcellular location is the cytoplasm. The catalysed reaction is an N-acyl-L-alpha-aminoacyl-tRNA + H2O = an N-acyl-L-amino acid + a tRNA + H(+). In terms of biological role, the natural substrate for this enzyme may be peptidyl-tRNAs which drop off the ribosome during protein synthesis. The protein is Peptidyl-tRNA hydrolase of Methanothermobacter thermautotrophicus (strain ATCC 29096 / DSM 1053 / JCM 10044 / NBRC 100330 / Delta H) (Methanobacterium thermoautotrophicum).